Consider the following 457-residue polypeptide: ATP synthase subunit beta (457 aa).

Residue Gly-147–Thr-154 participates in ATP binding.

The protein belongs to the ATPase alpha/beta chains family. In terms of assembly, F-type ATPases have 2 components, CF(1) - the catalytic core - and CF(0) - the membrane proton channel. CF(1) has five subunits: alpha(3), beta(3), gamma(1), delta(1), epsilon(1). CF(0) has three main subunits: a(1), b(2) and c(9-12). The alpha and beta chains form an alternating ring which encloses part of the gamma chain. CF(1) is attached to CF(0) by a central stalk formed by the gamma and epsilon chains, while a peripheral stalk is formed by the delta and b chains.

The protein resides in the cell inner membrane. The catalysed reaction is ATP + H2O + 4 H(+)(in) = ADP + phosphate + 5 H(+)(out). Produces ATP from ADP in the presence of a proton gradient across the membrane. The catalytic sites are hosted primarily by the beta subunits. The chain is ATP synthase subunit beta from Haemophilus influenzae (strain 86-028NP).